A 122-amino-acid polypeptide reads, in one-letter code: Histone H2B subacrosomal variant (122 aa).

Residues M1–H25 are compositionally biased toward basic residues. The segment at M1–S30 is disordered.

It belongs to the histone H2B family. Testis-specific. Restricted to the spermatid population of seminiferous epithelium. Not present in Sertoli cells, spermatogonia, spermatocytes or cells of the interstitial tissue (at protein level).

The protein resides in the cytoplasm. May act as an acrosome-nuclear docking protein in sperm. The sequence is that of Histone H2B subacrosomal variant (SUBH2BV) from Bos taurus (Bovine).